Consider the following 313-residue polypeptide: Porphobilinogen deaminase (313 aa).

Position 242 is an S-(dipyrrolylmethanemethyl)cysteine (Cys-242).

The protein belongs to the HMBS family. As to quaternary structure, monomer. Requires dipyrromethane as cofactor.

It catalyses the reaction 4 porphobilinogen + H2O = hydroxymethylbilane + 4 NH4(+). It participates in porphyrin-containing compound metabolism; protoporphyrin-IX biosynthesis; coproporphyrinogen-III from 5-aminolevulinate: step 2/4. In terms of biological role, tetrapolymerization of the monopyrrole PBG into the hydroxymethylbilane pre-uroporphyrinogen in several discrete steps. This chain is Porphobilinogen deaminase, found in Yersinia pseudotuberculosis serotype O:1b (strain IP 31758).